A 109-amino-acid chain; its full sequence is U26-theraphotoxin-Cg1b (109 aa).

The signal sequence occupies residues 1–18 (MNTIIPLLLLSLLITVYA). A propeptide spanning residues 19–67 (YALEDGNKEEMQDIAESEFEASNEMLQLAHLLEADRAETEEDRNSRQKR) is cleaved from the precursor. Cystine bridges form between cysteine 68–cysteine 83, cysteine 75–cysteine 88, and cysteine 82–cysteine 103.

It belongs to the neurotoxin 14 (magi-1) family. 07 (Jztx-56) subfamily. In terms of tissue distribution, expressed by the venom gland.

The protein localises to the secreted. Probable ion channel inhibitor. This chain is U26-theraphotoxin-Cg1b, found in Chilobrachys guangxiensis (Chinese earth tiger tarantula).